The sequence spans 846 residues: MAEITVGQLAQQTNKEVDALLKQLKSFGIEKSSEKDTLTPTEMKTLLEKINSAKNTATRKKVTSVKLDGKHKINVSVKRKRRVAKKMEQQESTTLEQPQELETMVQEVSQQVDIVKEQDNIEQIVENKEAVKVQEQRQAEIAKPVIKDSGFKITAMPEIKIEEIVAEDDEGLAASDKQAKKKAAKKVFSEAVNTNTKYKREEEEKKSKAKKAGGKGFKKANPRQLSQLAGDLESFDEFGAKKGKLKAPKVKKQEFTKPVENTVRTVEIYEGITVSELAQKMAVKGAEIVKVLFNMGVMATINQSLDQDTAILIVEEMGHKYTLHNENALEEAVTIVDRSSYKKISRAPVVTIMGHVDHGKTSLLDYIRQTRVVAGEAGGITQHIGAYSVKTDKGSITFLDTPGHEAFTSMRARGAKSTDIVILVVAADDGVMPQTEEAIQHAKAARVPIVVAVNKIDKPEADSDKVISELAQRNVIPESWGGDVMFVNVSAKTGEGVADLLEAVLLQSEVLELEAFAEGLAEGVVIESRLEKGRGPVATVLVQNGNLKQGDNILCGTEYGRVRAMHNDLGKKIKAAGPATPVEILGLSGVPAAGDEMVVIENEKKAKELAAQRSQKQKEAKIAQEQSLKLSNMFNNMGKEGEQQVLKIILKGDVQGSVEAIRESLLKLSTDEVKVDIIASGIGAITSSDVTLAVASTAVVIGFNVRADSAAKKLAETDGVEFRYYNIIYDLIDDVKKAMSGLLSPEMKEQIIGIAEVREVYRSSKFGSIAGCMVIEGVVKRTNPIRVLRNNVVIYEGTLESLKRFKDDASEVKKGLECGIGVKNYNDVREGDQIEVFEVIEVAKEL.

Positions lysine 199–lysine 219 are disordered. The span at serine 207–lysine 219 shows a compositional bias: basic residues. Positions serine 345–glutamate 512 constitute a tr-type G domain. The G1 stretch occupies residues glycine 354–threonine 361. Glycine 354–threonine 361 is a binding site for GTP. Residues glycine 379–histidine 383 form a G2 region. Residues aspartate 400 to glycine 403 form a G3 region. Residues aspartate 400–histidine 404 and asparagine 454–aspartate 457 each bind GTP. The tract at residues asparagine 454–aspartate 457 is G4. The tract at residues serine 490–lysine 492 is G5.

Belongs to the TRAFAC class translation factor GTPase superfamily. Classic translation factor GTPase family. IF-2 subfamily.

Its subcellular location is the cytoplasm. In terms of biological role, one of the essential components for the initiation of protein synthesis. Protects formylmethionyl-tRNA from spontaneous hydrolysis and promotes its binding to the 30S ribosomal subunits. Also involved in the hydrolysis of GTP during the formation of the 70S ribosomal complex. In Francisella tularensis subsp. holarctica (strain LVS), this protein is Translation initiation factor IF-2.